The sequence spans 422 residues: Monoacylglycerol lipase ABHD2 (422 aa).

The Cytoplasmic segment spans residues 1 to 15 (MSAQLEADVRTMSPE). The helical; Signal-anchor for type II membrane protein transmembrane segment at 16 to 36 (MPAMFDGMKLAAVAAVLYVIV) threads the bilayer. The Extracellular segment spans residues 37–422 (RSLNLKCPTA…HKPQCHQQKE (386 aa)). The region spanning 134–385 (MVICPGIGNH…HGGHLGFFEG (252 aa)) is the AB hydrolase-1 domain. An N-linked (GlcNAc...) asparagine glycan is attached at Asn-142. Ser-213 functions as the Nucleophile in the catalytic mechanism. Residues Asn-285, Asn-335, and Asn-344 are each glycosylated (N-linked (GlcNAc...) asparagine). Catalysis depends on charge relay system residues Asp-348 and His-379.

Belongs to the AB hydrolase superfamily. AB hydrolase 4 family.

It localises to the cell membrane. It carries out the reaction Hydrolyzes glycerol monoesters of long-chain fatty acids.. The catalysed reaction is an acetyl ester + H2O = an aliphatic alcohol + acetate + H(+). The enzyme catalyses a triacylglycerol + H2O = a diacylglycerol + a fatty acid + H(+). It catalyses the reaction 2-(5Z,8Z,11Z,14Z-eicosatetraenoyl)-glycerol + H2O = glycerol + (5Z,8Z,11Z,14Z)-eicosatetraenoate + H(+). It carries out the reaction a butanoate ester + H2O = an aliphatic alcohol + butanoate + H(+). The catalysed reaction is hexadecanoate ester + H2O = an aliphatic alcohol + hexadecanoate + H(+). With respect to regulation, acylglycerol lipase activity is activated upon binding to progesterone. Its function is as follows. Progesterone-dependent acylglycerol lipase that catalyzes hydrolysis of endocannabinoid arachidonoylglycerol (AG) from cell membrane. Acts as a progesterone receptor: progesterone-binding activates the acylglycerol lipase activity, mediating degradation of 1-arachidonoylglycerol (1AG) and 2-arachidonoylglycerol (2AG) to glycerol and arachidonic acid (AA). Also displays an ester hydrolase activity against acetyl ester, butanoate ester and hexadecanoate ester. Plays a key role in sperm capacitation in response to progesterone by mediating degradation of 2AG, an inhibitor of the sperm calcium channel CatSper, leading to calcium influx via CatSper and sperm activation. May also play a role in smooth muscle cells migration. This is Monoacylglycerol lipase ABHD2 (abhd2b) from Danio rerio (Zebrafish).